The sequence spans 577 residues: Proline--tRNA ligase (577 aa).

The protein belongs to the class-II aminoacyl-tRNA synthetase family. ProS type 1 subfamily. In terms of assembly, homodimer.

Its subcellular location is the cytoplasm. The catalysed reaction is tRNA(Pro) + L-proline + ATP = L-prolyl-tRNA(Pro) + AMP + diphosphate. Its function is as follows. Catalyzes the attachment of proline to tRNA(Pro) in a two-step reaction: proline is first activated by ATP to form Pro-AMP and then transferred to the acceptor end of tRNA(Pro). As ProRS can inadvertently accommodate and process non-cognate amino acids such as alanine and cysteine, to avoid such errors it has two additional distinct editing activities against alanine. One activity is designated as 'pretransfer' editing and involves the tRNA(Pro)-independent hydrolysis of activated Ala-AMP. The other activity is designated 'posttransfer' editing and involves deacylation of mischarged Ala-tRNA(Pro). The misacylated Cys-tRNA(Pro) is not edited by ProRS. This Thermotoga maritima (strain ATCC 43589 / DSM 3109 / JCM 10099 / NBRC 100826 / MSB8) protein is Proline--tRNA ligase.